Reading from the N-terminus, the 535-residue chain is CTP synthase (535 aa).

The segment at 1–267 is amidoligase domain; that stretch reads MTKYIFVTGG…DQIVCDHLKL (267 aa). Position 13 (Ser-13) interacts with CTP. Ser-13 serves as a coordination point for UTP. 14–19 contributes to the ATP binding site; it reads SLGKGI. Tyr-54 provides a ligand contact to L-glutamine. Asp-71 contributes to the ATP binding site. 2 residues coordinate Mg(2+): Asp-71 and Glu-141. CTP is bound by residues 148–150, 188–193, and Lys-224; these read DIE and KTKPTQ. Residues 188 to 193 and Lys-224 contribute to the UTP site; that span reads KTKPTQ. Residue 240-242 participates in ATP binding; it reads RDA. One can recognise a Glutamine amidotransferase type-1 domain in the interval 292–534; sequence KIALVGKYVE…VRASITNKES (243 aa). An L-glutamine-binding site is contributed by Gly-354. The Nucleophile; for glutamine hydrolysis role is filled by Cys-381. L-glutamine is bound by residues 382 to 385, Glu-405, and Arg-462; that span reads LGMQ. Active-site residues include His-507 and Glu-509.

Belongs to the CTP synthase family. As to quaternary structure, homotetramer.

The enzyme catalyses UTP + L-glutamine + ATP + H2O = CTP + L-glutamate + ADP + phosphate + 2 H(+). The catalysed reaction is L-glutamine + H2O = L-glutamate + NH4(+). It catalyses the reaction UTP + NH4(+) + ATP = CTP + ADP + phosphate + 2 H(+). The protein operates within pyrimidine metabolism; CTP biosynthesis via de novo pathway; CTP from UDP: step 2/2. With respect to regulation, allosterically activated by GTP, when glutamine is the substrate; GTP has no effect on the reaction when ammonia is the substrate. The allosteric effector GTP functions by stabilizing the protein conformation that binds the tetrahedral intermediate(s) formed during glutamine hydrolysis. Inhibited by the product CTP, via allosteric rather than competitive inhibition. Its function is as follows. Catalyzes the ATP-dependent amination of UTP to CTP with either L-glutamine or ammonia as the source of nitrogen. Regulates intracellular CTP levels through interactions with the four ribonucleotide triphosphates. This chain is CTP synthase, found in Bacillus cereus (strain ATCC 14579 / DSM 31 / CCUG 7414 / JCM 2152 / NBRC 15305 / NCIMB 9373 / NCTC 2599 / NRRL B-3711).